Reading from the N-terminus, the 170-residue chain is Small ribosomal subunit protein uS4 (170 aa).

Residues 100–164 form the S4 RNA-binding domain; it reads RRLQTVVYRE…SDLTDELHPA (65 aa).

This sequence belongs to the universal ribosomal protein uS4 family. In terms of assembly, part of the 30S ribosomal subunit. Contacts protein S5. The interaction surface between S4 and S5 is involved in control of translational fidelity.

Functionally, one of the primary rRNA binding proteins, it binds directly to 16S rRNA where it nucleates assembly of the body of the 30S subunit. In terms of biological role, with S5 and S12 plays an important role in translational accuracy. The polypeptide is Small ribosomal subunit protein uS4 (Halobacterium salinarum (strain ATCC 29341 / DSM 671 / R1)).